A 173-amino-acid chain; its full sequence is Oleosin 18.5 kDa (173 aa).

Residues 1–45 are polar; the sequence is MADTARGTHHDIIGRDQYPMMGRDRDQYQMSGRGSDYSKSRQIAK. The hydrophobic stretch occupies residues 46 to 117; the sequence is AATAVTAGGS…AAITVFSWIY (72 aa). 3 helical membrane passes run 54–74, 76–96, and 97–117; these read GSLLVLSSLTLVGTVIALTVA, PLLVIFSPILVPALITVALLI, and TGFLSSGGFGIAAITVFSWIY. The tract at residues 151–173 is disordered; sequence YYGQQHTGGEHDRDRTRGGQHTT. Positions 158 to 167 are enriched in basic and acidic residues; it reads GGEHDRDRTR.

This sequence belongs to the oleosin family.

Its subcellular location is the lipid droplet. The protein localises to the membrane. Its function is as follows. May have a structural role to stabilize the lipid body during desiccation of the seed by preventing coalescence of the oil. Probably interacts with both lipid and phospholipid moieties of lipid bodies. May also provide recognition signals for specific lipase anchorage in lipolysis during seedling growth. The sequence is that of Oleosin 18.5 kDa from Arabidopsis thaliana (Mouse-ear cress).